A 164-amino-acid chain; its full sequence is Protein HIT1 (164 aa).

Residues cysteine 8, cysteine 11, cysteine 28, and cysteine 32 each contribute to the Zn(2+) site. Residues 8–49 (CGICRGVDGKYKCPKCGVRYCSLKCYKDAAKHVHKESEQPRA) form an HIT-type; degenerate zinc finger.

The chain is Protein HIT1 (HIT1) from Saccharomyces cerevisiae (strain ATCC 204508 / S288c) (Baker's yeast).